The sequence spans 175 residues: NADH dehydrogenase [ubiquinone] 1 alpha subcomplex assembly factor 4 (175 aa).

Gly-2 is lipidated: N-myristoyl glycine. Ser-35 bears the Phosphoserine mark.

Belongs to the NDUFAF4 family. Binds calmodulin. Interacts with NDUFAF3. As to quaternary structure, (Microbial infection) Interacts with the vesicular stomatitis virus matrix protein/M; the interaction inhibits viral propagation. Post-translationally, phosphorylated on serine. Prolactin stimulate serine phosphorylation.

It localises to the mitochondrion. It is found in the membrane. Functionally, involved in the assembly of mitochondrial NADH:ubiquinone oxidoreductase complex (complex I). May be involved in cell proliferation and survival of hormone-dependent tumor cells. May be a regulator of breast tumor cell invasion. This chain is NADH dehydrogenase [ubiquinone] 1 alpha subcomplex assembly factor 4, found in Homo sapiens (Human).